Reading from the N-terminus, the 131-residue chain is Serum amyloid A-3 protein (131 aa).

An N-terminal signal peptide occupies residues 1–18; sequence MNLSTGIIFCFLILGVSS. Positions 94-105 are enriched in basic and acidic residues; sequence MTRDQVREDSKA. Residues 94–131 are disordered; it reads MTRDQVREDSKADQFANEWGRSGKDPNHFRPAGLPDKY.

Belongs to the SAA family. In terms of tissue distribution, expressed in the liver. Expressed in mammary epithelial cells. Expressed at high levels in mammary ductal cells and vesicle engorged alveoli, but absent from stromal and connective tissue and leukocytes. Secreted into colostrum and mastitic milk (at protein level). Low expression levels, if any, in normal milk (at protein level).

The protein resides in the secreted. Major acute phase reactant. Apolipoprotein of the HDL complex. May have a role in protection of the mammary gland during remodeling and infection. In vitro exhibits antimicrobial activity against Escherichia coli, Streptococcus uberis and Pseudomonas aeruginosa. This is Serum amyloid A-3 protein (SAA3) from Bos taurus (Bovine).